The chain runs to 311 residues: Cathepsin B (311 aa).

A signal peptide spans 1–19 (MRVLLSLVVILFIINSAFA). Positions 20–78 (VKINIGRPTKSHKTIHHETWVEEQTDQFDNIKVGQLLGFKRSPNRPKLQIKSYDPLGVQ) are excised as a propeptide. An N-linked (GlcNAc...) asparagine glycan is attached at N91. 5 cysteine pairs are disulfide-bonded: C92-C121, C104-C145, C138-C191, C167-C195, and C175-C182. C107 is a catalytic residue. N198 is a glycosylation site (N-linked (GlcNAc...) asparagine). Active-site residues include H261 and N281. N-linked (GlcNAc...) asparagine glycosylation occurs at N290.

It belongs to the peptidase C1 family.

It is found in the lysosome. The catalysed reaction is Hydrolysis of proteins with broad specificity for peptide bonds. Preferentially cleaves -Arg-Arg-|-Xaa bonds in small molecule substrates (thus differing from cathepsin L). In addition to being an endopeptidase, shows peptidyl-dipeptidase activity, liberating C-terminal dipeptides.. Thiol protease which is believed to participate in intracellular degradation and turnover of proteins. This chain is Cathepsin B (ctsB), found in Dictyostelium discoideum (Social amoeba).